We begin with the raw amino-acid sequence, 514 residues long: Cytochrome P450 monooxygenase FUS8 (514 aa).

A helical membrane pass occupies residues Leu28–Phe48. Asn225 and Asn443 each carry an N-linked (GlcNAc...) asparagine glycan. Cys460 serves as a coordination point for heme.

This sequence belongs to the cytochrome P450 family. Heme is required as a cofactor.

It is found in the membrane. The protein operates within mycotoxin biosynthesis. Its function is as follows. Cytochrome P450 monooxygenase; part of the gene cluster that mediates the biosynthesis of the mycotoxin fusarin C. Within the cluster, FUS1, FUS2, FUS8 and FUS9 are sufficient for fusarin production. The roles of the other FUS members are yet undetermined. The fusarin C synthetase FUS1 is responsible for the condensation of one acetyl-coenzyme A (CoA) unit with six malonyl-CoA units and the amide linkage of the arising heptaketide and homoserine, subsequently releasing the first intermediate, prefusarin, as an alcohol with an open ring structure. The cytochrome P450 monooxygenase FUS8 participates in multiple oxidation processes at carbon C-20 and is able to use the FUS1 product as substrate, resulting in formation of 20-hydroxy-prefusarin. This reaction seems to be essential before the 2-pyrrolidone ring closure can be catalyzed by FUS2, generating 20-hydroxy-fusarin. FUS8 is able to further oxidizes carbon C-20 after ring closure, resulting in the formation of carboxy-fusarin C. As the last step, FUS9 methylates the hydroxyl group at C-21 to generate fusarin C. Fusarin C can then rearrange to epi-fusarin C, the (z)-isomers, and fusarin A and fusarin D. The chain is Cytochrome P450 monooxygenase FUS8 from Gibberella moniliformis (strain M3125 / FGSC 7600) (Maize ear and stalk rot fungus).